Reading from the N-terminus, the 131-residue chain is Large ribosomal subunit protein bL19 (131 aa).

The protein belongs to the bacterial ribosomal protein bL19 family.

In terms of biological role, this protein is located at the 30S-50S ribosomal subunit interface and may play a role in the structure and function of the aminoacyl-tRNA binding site. The sequence is that of Large ribosomal subunit protein bL19 from Anaeromyxobacter sp. (strain K).